We begin with the raw amino-acid sequence, 149 residues long: MKGYSIKEFPERSARARIREIDISLKDAVNVAHFLKGMDLDSAKNVLDNVIEKKVPVPYFRYMDSVSHRKGIGPGRYPVKAARAFKKLLEDVSANAEFKGLSDSLEIVHIAVSKGRMIKKYTPKAYGRAGAFFKDLVNLEVVVRESGEE.

Belongs to the universal ribosomal protein uL22 family. Part of the 50S ribosomal subunit.

Functionally, this protein binds specifically to 23S rRNA. It makes multiple contacts with different domains of the 23S rRNA in the assembled 50S subunit and ribosome. The globular domain of the protein is located near the polypeptide exit tunnel on the outside of the subunit, while an extended beta-hairpin is found that lines the wall of the exit tunnel in the center of the 70S ribosome. The sequence is that of Large ribosomal subunit protein uL22 from Picrophilus torridus (strain ATCC 700027 / DSM 9790 / JCM 10055 / NBRC 100828 / KAW 2/3).